The chain runs to 198 residues: MYVGRFLLAGKLEDGTPIAVYGVCSRSFSDRRIEVREGAAFVVPEDPSYITENPYVTYTCARIVDEFLVLTNGAQTDPIADKLESGVPPREALVSVTFAMDYEHDEYNTPRISLITDGETFWLGRVAPEEVYFRVMKPKDGEGYLLSVYGEYAEVPSKPNMTLDREDPLECDPVPSFEHYVCSVIARHDGGRWSLEAR.

It belongs to the archaeal IMP cyclohydrolase family.

The catalysed reaction is IMP + H2O = 5-formamido-1-(5-phospho-D-ribosyl)imidazole-4-carboxamide. It functions in the pathway purine metabolism; IMP biosynthesis via de novo pathway; IMP from 5-formamido-1-(5-phospho-D-ribosyl)imidazole-4-carboxamide: step 1/1. Catalyzes the cyclization of 5-formylamidoimidazole-4-carboxamide ribonucleotide to IMP. The protein is IMP cyclohydrolase of Methanopyrus kandleri (strain AV19 / DSM 6324 / JCM 9639 / NBRC 100938).